Here is a 720-residue protein sequence, read N- to C-terminus: Beta-glucan synthesis-associated protein KRE6 (720 aa).

Polar residues-rich tracts occupy residues 1–17 (MPLRNLTETHNFSSTNL), 31–51 (LSSSPSFGQQNDNSTNDNAGL), and 69–90 (SLSSSVHYQPQGSDSSLLHDNS). The tract at residues 1–90 (MPLRNLTETH…SDSSLLHDNS (90 aa)) is disordered. Topologically, residues 1–252 (MPLRNLTETH…KYMDKRSASG (252 aa)) are cytoplasmic. Phosphoserine is present on residues S81, S116, S133, S134, S136, and S139. Disordered regions lie at residues 117–142 (TANDNSFLQPPHRAIASSPSLNSNLS) and 167–189 (QLNHHGRSPTSSPGNESSASFSS). Over residues 133–142 (SSPSLNSNLS) the composition is skewed to low complexity. Residues 253-273 (LAGVLLLFLAAIFIFIVLPAL) form a helical; Signal-anchor for type II membrane protein membrane-spanning segment. The Lumenal segment spans residues 274-720 (TFTGAIDHES…CTSSKFKLSS (447 aa)). The 376-residue stretch at 289–664 (TYLTQYQYPQ…YVRIYQPSNA (376 aa)) folds into the GH16 domain. 5 N-linked (GlcNAc...) asparagine glycosylation sites follow: N374, N461, N538, N563, and N691.

It belongs to the SKN1/KRE6 family. The cytoplasmic domain interacts with the actin patch assembly proteins LAS17 and SLA1. Interacts with KEG1.

Its subcellular location is the golgi apparatus membrane. In terms of biological role, involved in the synthesis of (1-&gt;6)- and (1-&gt;3)-beta-D-glucan polymers of the yeast cell wall in vivo. It is required for full activity of beta-glucan synthase in vitro. May be involved in the maturation and transport of cell wall proteins (CWP) to the cell wall. May act as a transglucosidase and contribute to the construction of a protein-bound glucan-structure that acts as an acceptor site for the addition of (1-&gt;6)-beta-D-glucan at the cell surface. The polypeptide is Beta-glucan synthesis-associated protein KRE6 (KRE6) (Saccharomyces cerevisiae (strain ATCC 204508 / S288c) (Baker's yeast)).